A 113-amino-acid chain; its full sequence is Mediator of RNA polymerase II transcription subunit 22 (113 aa).

Belongs to the Mediator complex subunit 22 family. Component of the Mediator complex.

Its subcellular location is the nucleus. Functionally, component of the Mediator complex, a coactivator involved in the regulated transcription of nearly all RNA polymerase II-dependent genes. Mediator functions as a bridge to convey information from gene-specific regulatory proteins to the basal RNA polymerase II transcription machinery. Mediator is recruited to promoters by direct interactions with regulatory proteins and serves as a scaffold for the assembly of a functional preinitiation complex with RNA polymerase II and the general transcription factors. The protein is Mediator of RNA polymerase II transcription subunit 22 (SRB6) of Candida glabrata (strain ATCC 2001 / BCRC 20586 / JCM 3761 / NBRC 0622 / NRRL Y-65 / CBS 138) (Yeast).